The primary structure comprises 221 residues: Ribose-5-phosphate isomerase A (221 aa).

Substrate-binding positions include 26 to 29, 81 to 84, and 94 to 97; these read TGST, DGAD, and KGGG. Residue E103 is the Proton acceptor of the active site. K121 contributes to the substrate binding site.

It belongs to the ribose 5-phosphate isomerase family. In terms of assembly, homodimer.

The enzyme catalyses aldehydo-D-ribose 5-phosphate = D-ribulose 5-phosphate. The protein operates within carbohydrate degradation; pentose phosphate pathway; D-ribose 5-phosphate from D-ribulose 5-phosphate (non-oxidative stage): step 1/1. In terms of biological role, catalyzes the reversible conversion of ribose-5-phosphate to ribulose 5-phosphate. The sequence is that of Ribose-5-phosphate isomerase A from Bacillus mycoides (strain KBAB4) (Bacillus weihenstephanensis).